We begin with the raw amino-acid sequence, 340 residues long: Phosphate acyltransferase (340 aa).

Belongs to the PlsX family. Homodimer. Probably interacts with PlsY.

The protein resides in the cytoplasm. The enzyme catalyses a fatty acyl-[ACP] + phosphate = an acyl phosphate + holo-[ACP]. The protein operates within lipid metabolism; phospholipid metabolism. In terms of biological role, catalyzes the reversible formation of acyl-phosphate (acyl-PO(4)) from acyl-[acyl-carrier-protein] (acyl-ACP). This enzyme utilizes acyl-ACP as fatty acyl donor, but not acyl-CoA. The polypeptide is Phosphate acyltransferase (Helicobacter pylori (strain HPAG1)).